The sequence spans 340 residues: Guanine nucleotide-binding protein G(I)/G(S)/G(T) subunit beta-2 (340 aa).

S2 is modified (N-acetylserine). 7 WD repeats span residues 53–83 (GHLA…IIWD), 95–125 (LRSS…SIYS), 141–170 (GHTG…ALWD), 182–212 (GHSG…KLWD), 224–254 (GHES…RLFD), 268–298 (NIIC…NIWD), and 310–340 (GHDN…KIWN). Y239 is subject to Phosphotyrosine.

The protein belongs to the WD repeat G protein beta family. As to quaternary structure, g proteins are composed of 3 units, alpha, beta and gamma. In this context, interacts with GNAI2 and GNG2. Interacts with ARHGEF18 and RASD2. Interacts with ATXN10. Interacts with SCN8A. As to expression, expressed in all cardiac subcompartments and in the brain, with highest levels in the atrioventricular node and brain.

Its subcellular location is the cytoplasm. It is found in the perinuclear region. The protein localises to the cell membrane. Guanine nucleotide-binding proteins (G proteins) are involved as a modulator or transducer in various transmembrane signaling systems. The beta and gamma chains are required for the GTPase activity, for replacement of GDP by GTP, and for G protein-effector interaction. The sequence is that of Guanine nucleotide-binding protein G(I)/G(S)/G(T) subunit beta-2 (GNB2) from Homo sapiens (Human).